The sequence spans 216 residues: Splicing factor U2AF 23 kDa subunit (216 aa).

A C3H1-type 1 zinc finger spans residues 12 to 40; that stretch reads EQDKVNCSFYYKIGACRHGERCSRKHVKP. The RRM domain occupies 44-141; sequence QTILCPNMYK…RPVYAELSPV (98 aa). The C3H1-type 2 zinc-finger motif lies at 143-170; sequence DFREACCRQHETSECQRGGLCNFMHAKK. Positions 194-216 are disordered; it reads EMKKEPNSDSTNRWVSVTAERKN.

As to quaternary structure, forms a heterodimer with the U2AF large subunit. Can also form a homodimer. U2AF large subunit (U2AF59), U2AF small subunit (U2AF23) and SF1 (bpb1) interact to form a complex required for complex A formation. Interacts with cwf13.

The protein resides in the nucleus. Necessary for the splicing of pre-mRNA. The SF1-U2AF59-U2AF23 complex has a role in the recognition of the branch site (5'-UACUAAC-3'), the pyrimidine tract and the 3'-splice site at the 3'-end of introns. This Schizosaccharomyces pombe (strain 972 / ATCC 24843) (Fission yeast) protein is Splicing factor U2AF 23 kDa subunit.